The chain runs to 188 residues: Putative adenylate kinase (188 aa).

5 residues coordinate ATP: Gly10, Gly12, Lys13, Ser14, and Thr15. Positions 30–53 (HVSSFLIQNKAFSEYDELRQSYVI) are NMP. Residues 103 to 113 (RRGWGELKIAE) form an LID region. Arg104 and Lys142 together coordinate ATP.

This sequence belongs to the adenylate kinase family. AK6 subfamily. Interacts with uS11. Not a structural component of 40S pre-ribosomes, but transiently interacts with them by binding to uS11.

The catalysed reaction is AMP + ATP = 2 ADP. It catalyses the reaction ATP + H2O = ADP + phosphate + H(+). In terms of biological role, broad-specificity nucleoside monophosphate (NMP) kinase that catalyzes the reversible transfer of the terminal phosphate group between nucleoside triphosphates and monophosphates. Also has ATPase activity. Involved in the late maturation steps of the 30S ribosomal particles, specifically 16S rRNA maturation. While NMP activity is not required for ribosome maturation, ATPase activity is. Associates transiently with small ribosomal subunit protein uS11. ATP hydrolysis breaks the interaction with uS11. May temporarily remove uS11 from the ribosome to enable a conformational change of the ribosomal RNA that is needed for the final maturation step of the small ribosomal subunit. This chain is Putative adenylate kinase, found in Sulfurisphaera tokodaii (strain DSM 16993 / JCM 10545 / NBRC 100140 / 7) (Sulfolobus tokodaii).